The chain runs to 627 residues: Probable inactive receptor kinase At3g02880 (627 aa).

A signal peptide spans 1-23 (MKYKRKLSLSVVFLFVFYLAAVT). LRR repeat units follow at residues 91–112 (QLKT…DFSN), 115–137 (LLRY…LFTL), 139–161 (SIIR…VNSA), 163–184 (RLVT…ITLP), and 185–206 (LQQF…LSSW). The disordered stretch occupies residues 222–246 (DTCEAESPNGGDAGGPNTPPEKKDS). The chain crosses the membrane as a helical span at residues 253 to 273 (AIVGIVIGCVVGLLLLLLILF). The region spanning 345–620 (KASAEVLGKG…LIEEVSHSSG (276 aa)) is the Protein kinase domain. S347 is modified (phosphoserine). ATP contacts are provided by residues 351–359 (LGKGTVGSS) and K373. The helical transmembrane segment at 389–409 (LHVLGSMSHANLVTLIAYYFS) threads the bilayer. S424 is modified (phosphoserine). T444 carries the post-translational modification Phosphothreonine. S519 carries the phosphoserine modification. T595 carries the phosphothreonine modification. Phosphoserine occurs at positions 621 and 626.

The protein belongs to the protein kinase superfamily. Ser/Thr protein kinase family.

It is found in the membrane. The polypeptide is Probable inactive receptor kinase At3g02880 (Arabidopsis thaliana (Mouse-ear cress)).